Here is a 438-residue protein sequence, read N- to C-terminus: UDP-N-acetylmuramoylalanine--D-glutamate ligase (438 aa).

Residue 112 to 118 (GSNGKST) participates in ATP binding.

Belongs to the MurCDEF family.

It is found in the cytoplasm. It catalyses the reaction UDP-N-acetyl-alpha-D-muramoyl-L-alanine + D-glutamate + ATP = UDP-N-acetyl-alpha-D-muramoyl-L-alanyl-D-glutamate + ADP + phosphate + H(+). Its pathway is cell wall biogenesis; peptidoglycan biosynthesis. In terms of biological role, cell wall formation. Catalyzes the addition of glutamate to the nucleotide precursor UDP-N-acetylmuramoyl-L-alanine (UMA). The protein is UDP-N-acetylmuramoylalanine--D-glutamate ligase of Salmonella typhi.